Reading from the N-terminus, the 388-residue chain is Succinate--CoA ligase [ADP-forming] subunit beta (388 aa).

Positions 9–244 (KDLLVSYDIA…PSQENVRDVL (236 aa)) constitute an ATP-grasp domain. ATP contacts are provided by residues K46, 53–55 (GRG), V102, and E107. The Mg(2+) site is built by N199 and D213. Substrate-binding positions include N264 and 321 to 323 (GIM).

Belongs to the succinate/malate CoA ligase beta subunit family. Heterotetramer of two alpha and two beta subunits. It depends on Mg(2+) as a cofactor.

It carries out the reaction succinate + ATP + CoA = succinyl-CoA + ADP + phosphate. The catalysed reaction is GTP + succinate + CoA = succinyl-CoA + GDP + phosphate. It participates in carbohydrate metabolism; tricarboxylic acid cycle; succinate from succinyl-CoA (ligase route): step 1/1. Succinyl-CoA synthetase functions in the citric acid cycle (TCA), coupling the hydrolysis of succinyl-CoA to the synthesis of either ATP or GTP and thus represents the only step of substrate-level phosphorylation in the TCA. The beta subunit provides nucleotide specificity of the enzyme and binds the substrate succinate, while the binding sites for coenzyme A and phosphate are found in the alpha subunit. The protein is Succinate--CoA ligase [ADP-forming] subunit beta of Chlamydia caviae (strain ATCC VR-813 / DSM 19441 / 03DC25 / GPIC) (Chlamydophila caviae).